The sequence spans 376 residues: Chaperone protein DnaJ (376 aa).

One can recognise a J domain in the interval 5-69; the sequence is DYYEVLGVSK…QKRAQYDQYG (65 aa). The segment at 133-215 adopts a CR-type zinc-finger fold; that stretch reads GKDAEIEIPR…CHGKGRVTKT (83 aa). Positions 146, 149, 163, 166, 189, 192, 203, and 206 each coordinate Zn(2+). CXXCXGXG motif repeat units lie at residues 146-153, 163-170, 189-196, and 203-210; these read CDTCHGSG, CSHCGGKG, CQYCNGTG, and CPTCHGKG.

Belongs to the DnaJ family. Homodimer. Zn(2+) serves as cofactor.

It localises to the cytoplasm. Its function is as follows. Participates actively in the response to hyperosmotic and heat shock by preventing the aggregation of stress-denatured proteins and by disaggregating proteins, also in an autonomous, DnaK-independent fashion. Unfolded proteins bind initially to DnaJ; upon interaction with the DnaJ-bound protein, DnaK hydrolyzes its bound ATP, resulting in the formation of a stable complex. GrpE releases ADP from DnaK; ATP binding to DnaK triggers the release of the substrate protein, thus completing the reaction cycle. Several rounds of ATP-dependent interactions between DnaJ, DnaK and GrpE are required for fully efficient folding. Also involved, together with DnaK and GrpE, in the DNA replication of plasmids through activation of initiation proteins. In Listeria monocytogenes serotype 4b (strain CLIP80459), this protein is Chaperone protein DnaJ.